Consider the following 215-residue polypeptide: Pyrrolidone-carboxylate peptidase (215 aa).

Active-site residues include glutamate 81, cysteine 144, and histidine 168.

The protein belongs to the peptidase C15 family. Homotetramer.

The protein resides in the cytoplasm. It catalyses the reaction Release of an N-terminal pyroglutamyl group from a polypeptide, the second amino acid generally not being Pro.. Removes 5-oxoproline from various penultimate amino acid residues except L-proline. The polypeptide is Pyrrolidone-carboxylate peptidase (pcp) (Bacillus subtilis (strain 168)).